Here is a 202-residue protein sequence, read N- to C-terminus: Urease accessory protein UreE (202 aa).

Residues 138 to 202 (RGAYHSHGGH…HGHHHGHKHD (65 aa)) are disordered. The span at 147 to 193 (HSHDHGHAAHDHGHAAHDHGHNHDHDHGHAHGHDHQHDHNCDHDHDH) shows a compositional bias: basic and acidic residues.

The protein belongs to the UreE family.

It localises to the cytoplasm. Functionally, involved in urease metallocenter assembly. Binds nickel. Probably functions as a nickel donor during metallocenter assembly. The protein is Urease accessory protein UreE of Rhizobium etli (strain CIAT 652).